Reading from the N-terminus, the 871-residue chain is Bifunctional cordycepin biosynthesis cluster protein 3 (871 aa).

It functions in the pathway secondary metabolite biosynthesis. Functionally, nucleoside/nucleotide kinase; part of the gene cluster that mediates the biosynthesis of cordycepin (COR) and pentostatin (PTN), two adenosine analogs with related bioactivity profiles as both mimic adenosine and can inhibit some of the processes that are adenosine dependent. Within the pathway, cns3 catalyzes both the first step of cordycepin biosynthesis by phosphorylating adenosine into 3'-AMP via its kinase activity and the conversion of adenosine into pentostatin via its ATP phosphoribosyltransferase activity. The first step of cordycepin biosynthesis involves hydroxyl phosphorylation of the 3'-OH position on adenosine to produce adenosine-3'-monophosphate (3'-AMP), catalyzed by kinase activity of cns3. Next, 3'-AMP is dephosphorylated to 2'-carbonyl-3'-deoxyadenosine (2'-C-3'-dA) by cns2, which is finally converted to cordycepin (3'-deoxyadenosine) by the oxidoreductase cns1. The polypeptide is Bifunctional cordycepin biosynthesis cluster protein 3 (Cordyceps militaris (strain CM01) (Caterpillar fungus)).